Reading from the N-terminus, the 578-residue chain is Frizzled and smoothened-like protein Q (578 aa).

An N-terminal signal peptide occupies residues 1 to 23 (MKNSFLINILIIYYLFIILFVNS). The Extracellular segment spans residues 24–233 (QDLKLGGSCE…GKTKILDRTN (210 aa)). Residues 27–157 (KLGGSCELID…GAPMFPINST (131 aa)) enclose the FZ domain. 4 disulfides stabilise this stretch: Cys32-Cys95, Cys41-Cys88, Cys79-Cys128, and Cys121-Cys141. N-linked (GlcNAc...) asparagine glycans are attached at residues Asn46, Asn64, Asn99, and Asn104. N-linked (GlcNAc...) asparagine glycans are attached at residues Asn144, Asn155, Asn181, and Asn233. Residues 234-254 (YTLTSISFITCIFMILTFGVL) traverse the membrane as a helical segment. The Cytoplasmic segment spans residues 255-261 (PNKITHR). A helical membrane pass occupies residues 262-282 (MESILSFACGGCITALSLFIQ). The Extracellular portion of the chain corresponds to 283 to 305 (SRQDNFNCSSDPGRFKSQSDYLC). N-linked (GlcNAc...) asparagine glycosylation is present at Asn289. The helical transmembrane segment at 306–326 (LLTGLIFQFGAITSIFWSPMI) threads the bilayer. The Cytoplasmic segment spans residues 327–341 (AYDFYITSTLGKIRK). A helical transmembrane segment spans residues 342 to 362 (FGLYRIVLWSFIFVLTALPAF). The Extracellular segment spans residues 363 to 388 (GGKYSATVATNCWINSDDGSAWQYVS). Residues 389 to 409 (FYIPSWCAMGLICLFSILSVI) form a helical membrane-spanning segment. The Cytoplasmic segment spans residues 410-422 (NVSKMYIQTPNNR). Residues 423–443 (ILFFNIKILITLLLFLFVLTF) traverse the membrane as a helical segment. Residues 444 to 490 (ASSLKFYMEERMDTYFDAIAVWVECIGKGDPSQCELHAPGYDLKALN) are Extracellular-facing. The helical transmembrane segment at 491–511 (IVVIGILGFTVFIGYGLDPIV) threads the bilayer. Residues 512–578 (IHIWMESKKF…LKSTEINQQP (67 aa)) lie on the Cytoplasmic side of the membrane. The segment covering 544 to 556 (NNNNNETASTSSG) has biased composition (low complexity). Positions 544 to 578 (NNNNNETASTSSGNERKQTTVKMSNLKSTEINQQP) are disordered. Residues 563 to 578 (TVKMSNLKSTEINQQP) are compositionally biased toward polar residues.

The protein belongs to the G-protein coupled receptor Fz/Smo family.

The protein resides in the membrane. The chain is Frizzled and smoothened-like protein Q (fslQ) from Dictyostelium discoideum (Social amoeba).